We begin with the raw amino-acid sequence, 1203 residues long: DNA-directed RNA polymerase subunit beta' (1203 aa).

The Zn(2+) site is built by cysteine 60, cysteine 62, cysteine 75, and cysteine 78. 3 residues coordinate Mg(2+): aspartate 449, aspartate 451, and aspartate 453. Cysteine 818, cysteine 892, cysteine 899, and cysteine 902 together coordinate Zn(2+).

It belongs to the RNA polymerase beta' chain family. The RNAP catalytic core consists of 2 alpha, 1 beta, 1 beta' and 1 omega subunit. When a sigma factor is associated with the core the holoenzyme is formed, which can initiate transcription. It depends on Mg(2+) as a cofactor. Zn(2+) is required as a cofactor.

It carries out the reaction RNA(n) + a ribonucleoside 5'-triphosphate = RNA(n+1) + diphosphate. In terms of biological role, DNA-dependent RNA polymerase catalyzes the transcription of DNA into RNA using the four ribonucleoside triphosphates as substrates. The chain is DNA-directed RNA polymerase subunit beta' from Bacillus cereus (strain ATCC 14579 / DSM 31 / CCUG 7414 / JCM 2152 / NBRC 15305 / NCIMB 9373 / NCTC 2599 / NRRL B-3711).